Consider the following 216-residue polypeptide: Uracil phosphoribosyltransferase (216 aa).

Residues R85, R110, and 135–143 (DPMVATGYS) contribute to the 5-phospho-alpha-D-ribose 1-diphosphate site. Uracil contacts are provided by residues I200 and 205-207 (GDA). Position 206 (D206) interacts with 5-phospho-alpha-D-ribose 1-diphosphate.

The protein belongs to the UPRTase family. The cofactor is Mg(2+).

The enzyme catalyses UMP + diphosphate = 5-phospho-alpha-D-ribose 1-diphosphate + uracil. The protein operates within pyrimidine metabolism; UMP biosynthesis via salvage pathway; UMP from uracil: step 1/1. With respect to regulation, allosterically activated by GTP. Its function is as follows. Catalyzes the conversion of uracil and 5-phospho-alpha-D-ribose 1-diphosphate (PRPP) to UMP and diphosphate. The sequence is that of Uracil phosphoribosyltransferase from Burkholderia pseudomallei (strain 668).